Reading from the N-terminus, the 430-residue chain is MNVGKLQPVRGTRDLLPEECYKFWHIRDVAHDIGERYGFVPVETPIFEFQDVFLKTLGDSSDIIGKEMYSFPDRGGDVLVLRPELTAAVARMLICERLTLPARLFTFGPVFRYERPQKCRQRQFHQINYEHFGAGCTADAELMALAYDILGALNLRSEVQLEINSLGNQDSILGYRNSLLKYFEKHEHALSEDSRRRLQTNPLRILDSKDRGDIAILCGAPVIADFYDDESNMTFNGVMQQLDNLGIPYTVNPRLVRGLDYYCGTVFEFKTTSLGSQDAVIAGGRYDKLVASMGGGDVPAVGFAGGVERLASLAAYSHSTRFSVAFLPLGEEAARCAMRSAYELRGRGIRVLCDGVVEKLKIGLKHADRSGVDLALILGDEEIAKGEVLCRHMDTGLQQTVSISNLGDYVSGMESNAQGNNRAALSSAGE.

Belongs to the class-II aminoacyl-tRNA synthetase family. In terms of assembly, homodimer.

It localises to the cytoplasm. It catalyses the reaction tRNA(His) + L-histidine + ATP = L-histidyl-tRNA(His) + AMP + diphosphate + H(+). This is Histidine--tRNA ligase from Anaplasma marginale (strain St. Maries).